Reading from the N-terminus, the 273-residue chain is 2,3,4,5-tetrahydropyridine-2,6-dicarboxylate N-succinyltransferase (273 aa).

Substrate-binding residues include Arg-105 and Asp-142.

Belongs to the transferase hexapeptide repeat family. Homotrimer.

The protein resides in the cytoplasm. The catalysed reaction is (S)-2,3,4,5-tetrahydrodipicolinate + succinyl-CoA + H2O = (S)-2-succinylamino-6-oxoheptanedioate + CoA. The protein operates within amino-acid biosynthesis; L-lysine biosynthesis via DAP pathway; LL-2,6-diaminopimelate from (S)-tetrahydrodipicolinate (succinylase route): step 1/3. This Bordetella avium (strain 197N) protein is 2,3,4,5-tetrahydropyridine-2,6-dicarboxylate N-succinyltransferase.